A 245-amino-acid chain; its full sequence is Carboxy-S-adenosyl-L-methionine synthase (245 aa).

S-adenosyl-L-methionine is bound by residues Tyr42, 67–69 (GCS), 92–93 (DN), 120–121 (DI), Asn135, and Arg202.

This sequence belongs to the class I-like SAM-binding methyltransferase superfamily. Cx-SAM synthase family. In terms of assembly, homodimer.

The catalysed reaction is prephenate + S-adenosyl-L-methionine = carboxy-S-adenosyl-L-methionine + 3-phenylpyruvate + H2O. Its function is as follows. Catalyzes the conversion of S-adenosyl-L-methionine (SAM) to carboxy-S-adenosyl-L-methionine (Cx-SAM). The chain is Carboxy-S-adenosyl-L-methionine synthase from Vibrio campbellii (strain ATCC BAA-1116).